The following is a 248-amino-acid chain: Mannose-binding protein C (248 aa).

A signal peptide spans 1 to 20; sequence MSLIPSLSLLLMSMVAASYS. Residues 42–99 form the Collagen-like domain; sequence GINGFPGKDGRDGTKGEKGEPGQGLRGLQGPPGKLGPPGNPGPSGSPGPKGQKGDPGN. The disordered stretch occupies residues 43-110; the sequence is INGFPGKDGR…PDCDSSLAVS (68 aa). P47 is subject to 4-hydroxyproline. The span at 49-61 shows a compositional bias: basic and acidic residues; sequence KDGRDGTKGEKGE. Residues P73, P79, P82, and P88 each carry the 4-hydroxyproline modification. Pro residues predominate over residues 75–87; sequence KLGPPGNPGPSGS. Residues 112–130 are a coiled coil; sequence RKALQTEMARIKKWLTFSL. Residues 134-245 form the C-type lectin domain; sequence VGNKFFLTNG…CSSSHLAVCE (112 aa). Intrachain disulfides connect C155–C244 and C222–C236.

As to quaternary structure, oligomeric complex of 3 or more homotrimers. Interacts with MASP1 and MASP2. Interacts with MEP1A and MEP1B and may inhibit their catalytic activity. In terms of processing, hydroxylation on proline residues within the sequence motif, GXPG, is most likely to be 4-hydroxy as this fits the requirement for 4-hydroxylation in vertebrates.

The protein resides in the secreted. Its function is as follows. Calcium-dependent lectin involved in innate immune defense. Binds mannose, fucose and N-acetylglucosamine on different microorganisms and activates the lectin complement pathway. Binds to late apoptotic cells, as well as to apoptotic blebs and to necrotic cells, but not to early apoptotic cells, facilitating their uptake by macrophages. This chain is Mannose-binding protein C (MBL2), found in Nomascus concolor (Black crested gibbon).